Consider the following 299-residue polypeptide: ATP phosphoribosyltransferase (299 aa).

Belongs to the ATP phosphoribosyltransferase family. Long subfamily. It depends on Mg(2+) as a cofactor.

The protein localises to the cytoplasm. It catalyses the reaction 1-(5-phospho-beta-D-ribosyl)-ATP + diphosphate = 5-phospho-alpha-D-ribose 1-diphosphate + ATP. It participates in amino-acid biosynthesis; L-histidine biosynthesis; L-histidine from 5-phospho-alpha-D-ribose 1-diphosphate: step 1/9. Feedback inhibited by histidine. Its function is as follows. Catalyzes the condensation of ATP and 5-phosphoribose 1-diphosphate to form N'-(5'-phosphoribosyl)-ATP (PR-ATP). Has a crucial role in the pathway because the rate of histidine biosynthesis seems to be controlled primarily by regulation of HisG enzymatic activity. The sequence is that of ATP phosphoribosyltransferase from Shewanella sp. (strain ANA-3).